A 170-amino-acid polypeptide reads, in one-letter code: Adenine phosphoribosyltransferase (170 aa).

Belongs to the purine/pyrimidine phosphoribosyltransferase family. As to quaternary structure, homodimer.

Its subcellular location is the cytoplasm. The catalysed reaction is AMP + diphosphate = 5-phospho-alpha-D-ribose 1-diphosphate + adenine. The protein operates within purine metabolism; AMP biosynthesis via salvage pathway; AMP from adenine: step 1/1. Functionally, catalyzes a salvage reaction resulting in the formation of AMP, that is energically less costly than de novo synthesis. In Thermotoga petrophila (strain ATCC BAA-488 / DSM 13995 / JCM 10881 / RKU-1), this protein is Adenine phosphoribosyltransferase.